We begin with the raw amino-acid sequence, 419 residues long: Phospho-N-acetylmuramoyl-pentapeptide-transferase (419 aa).

10 helical membrane-spanning segments follow: residues 22 to 42 (YVSFRSGLALILSLFISTAIG), 72 to 92 (TPTMGGIIIIIAILIPTLLCA), 94 to 114 (LNNIYVILMLVTTVWLGALGF), 135 to 155 (IVGQVGLGLIVGLVLFMSPDV), 210 to 230 (AAWLVFVLMVIFVVTAVSNGA), 238 to 258 (GLAAGTSAIIGVALGILAYMS), 266 to 286 (FLNIMFIPGAEELVVYAAAFI), 303 to 323 (FMGDTGSLTLGGIIAVFAIII), 327 to 347 (LLIPILCGIFLVENISVMLQV), and 396 to 416 (KIVVRFWLIGIILAVMTIVTL).

This sequence belongs to the glycosyltransferase 4 family. MraY subfamily. It depends on Mg(2+) as a cofactor.

It is found in the cell inner membrane. It catalyses the reaction UDP-N-acetyl-alpha-D-muramoyl-L-alanyl-gamma-D-glutamyl-meso-2,6-diaminopimeloyl-D-alanyl-D-alanine + di-trans,octa-cis-undecaprenyl phosphate = di-trans,octa-cis-undecaprenyl diphospho-N-acetyl-alpha-D-muramoyl-L-alanyl-D-glutamyl-meso-2,6-diaminopimeloyl-D-alanyl-D-alanine + UMP. Its pathway is cell wall biogenesis; peptidoglycan biosynthesis. In terms of biological role, catalyzes the initial step of the lipid cycle reactions in the biosynthesis of the cell wall peptidoglycan: transfers peptidoglycan precursor phospho-MurNAc-pentapeptide from UDP-MurNAc-pentapeptide onto the lipid carrier undecaprenyl phosphate, yielding undecaprenyl-pyrophosphoryl-MurNAc-pentapeptide, known as lipid I. The chain is Phospho-N-acetylmuramoyl-pentapeptide-transferase from Parabacteroides distasonis (strain ATCC 8503 / DSM 20701 / CIP 104284 / JCM 5825 / NCTC 11152).